We begin with the raw amino-acid sequence, 45 residues long: NLR family pyrin domain-containing protein 2B (45 aa).

In terms of tissue distribution, expressed in all tissues tested, including spleen, lymph node, thymus, tonsil, peripheral blood leukocyte, bone marrow, liver, heart, brain, placenta, lung, skeletal muscle, kidney and pancreas.

It is found in the cytoplasm. It localises to the nucleus. Its function is as follows. May function as a negative regulator of NF-kappa-B by preventing RELA/p65 phosphorylation at 'Ser-536', thereby inhibiting its transcriptional activity. Through NF-kappa-B regulation may control cytokine release upon Toll-like receptors activation and therefore play a role in modulation of innate immunity. May also play a role in cell cycle progression and apoptotic process. This is NLR family pyrin domain-containing protein 2B from Homo sapiens (Human).